Consider the following 418-residue polypeptide: Probable endo-beta-1,4-glucanase celB (418 aa).

An N-terminal signal peptide occupies residues 1–18; that stretch reads MVRTFAVTALALLPLVAA. N-linked (GlcNAc...) asparagine glycosylation is found at Asn46, Asn118, and Asn136. The Nucleophile role is filled by Glu215. Catalysis depends on Glu220, which acts as the Proton donor. N-linked (GlcNAc...) asparagine glycosylation is found at Asn234 and Asn291.

The protein belongs to the glycosyl hydrolase 7 (cellulase C) family.

The protein resides in the secreted. It catalyses the reaction Endohydrolysis of (1-&gt;4)-beta-D-glucosidic linkages in cellulose, lichenin and cereal beta-D-glucans.. In terms of biological role, has endoglucanase activity on substrates containing beta-1,4 glycosidic bonds, like in carboxymethylcellulose (CMC), hydroxyethylcellulose (HEC) and beta-glucan. Involved in the degradation of complex natural cellulosic substrates. This is Probable endo-beta-1,4-glucanase celB (celB) from Aspergillus clavatus (strain ATCC 1007 / CBS 513.65 / DSM 816 / NCTC 3887 / NRRL 1 / QM 1276 / 107).